Reading from the N-terminus, the 1212-residue chain is MGVDFDVKTFCHNLRATKPPYECPVETCRKVYKSYSGIEYHLYHYDHDSPPPPQQTPLRKHKKKGRQSRPANKQSPSPSEVSQSPGREVMSYAQAQRMVEVDLHGRVHRISIFDNLDVVSEDEEAPEEAPENGSNKENTETPAATPKSGKHKNKEKRKDSNHHHHSAPASAAPKLPEVVYRELEQDTPDAPPRPTSYYRYIEKSAEELDEEVEYDMDEEDYIWLDIMNERRKTEGVSPIPQEIFEYLMDRLEKESYFESHNKGDPNALVDEDAVCCICNDGECQNSNVILFCDMCNLAVHQECYGVPYIPEGQWLCRRCLQSPSRAVDCALCPNKGGAFKQTDDGRWAHVVCALWIPEVCFANTVFLEPIDSIEHIPPARWKLTCYICKQRGSGACIQCHKANCYTAFHVTCAQQAGLYMKMEPVRETGANGTSFSVRKTAYCDIHTPPGSARRLPALSHSEGEEEEDEEEDEGKSWSSEKVKKAKAKSRIKMKKARKILAEKRAAAPVVSVPCIPPHRLSKITNRLTIQRKSQFMQRLHSYWTLKRQSRNGVPLLRRLQTHLQSQRNCEQVGRDSDDKNWALKEQLKSWQRLRHDLERARLLVELIRKREKLKRETIKIQQIAMEMQLTPFLILLRKTLEQLQEKDTGNIFSEPVPLSEVPDYLDHIKKPMDFFTMKQNLEAYRYLNFDDFEEDFNLIVSNCLKYNAKDTIFYRAAVRLREQGGAVLRQARRQAEKMGIDFETGMHIPHNLAGDEVSHHTEDVEEERLVLLENQKHLPVEEQLKLLLERLDEVNASKQSVGRSRRAKMIKKEMTALRRKLAHQRETGRDGPERHGPSGRGNLTPHPAACDKDGQTDSAAEESSSQETSKGLGPNMSSTPAHEVGRRTSVLFSKKNPKTAGPPKRPGRPPKNRESQMTPSHGGSPVGPPQLPIMGSLRQRKRGRSPRPSSSSDSDSDKSTEDPPMDLPANGFSSGNQPVKKSFLVYRNDCNLPRSSSDSESSSSSSSSAASDRTSTTPSKQGRGKPSFSRGTFPEDSSEDTSGTENEAYSVGTGRGVGHSMVRKSLGRGAGWLSEDEDSPLDALDLVWAKCRGYPSYPALIIDPKMPREGMFHHGVPIPVPPLEVLKLGEQMTQEAREHLYLVLFFDNKRTWQWLPRTKLVPLGVNQDLDKEKMLEGRKSNIRKSVQIAYHRALQHRSKVQGEQSSETSDSD.

The C2H2-type zinc finger occupies 21 to 47; the sequence is YECPVETCRKVYKSYSGIEYHLYHYDH. Disordered stretches follow at residues 43–87 and 118–176; these read YHYD…SPGR and VVSE…PKLP. A compositionally biased stretch (basic residues) spans 58 to 67; that stretch reads LRKHKKKGRQ. The interval 59–221 is interaction with KAT6A and KAT6B; the sequence is RKHKKKGRQS…VEYDMDEEDY (163 aa). Residues 74–85 show a composition bias toward low complexity; the sequence is QSPSPSEVSQSP. Over residues 119 to 130 the composition is skewed to acidic residues; the sequence is VSEDEEAPEEAP. A Phosphoserine modification is found at serine 120. The residue at position 147 (lysine 147) is an N6-acetyllysine. A compositionally biased stretch (basic residues) spans 148-166; the sequence is SGKHKNKEKRKDSNHHHHS. The residue at position 237 (serine 237) is a Phosphoserine. A PHD-type 1 zinc finger spans residues 272-322; it reads DAVCCICNDGECQNSNVILFCDMCNLAVHQECYGVPYIPEGQWLCRRCLQS. A C2HC pre-PHD-type zinc finger spans residues 326–359; that stretch reads AVDCALCPNKGGAFKQTDDGRWAHVVCALWIPEV. The PHD-type 2 zinc-finger motif lies at 383-447; that stretch reads LTCYICKQRG…RKTAYCDIHT (65 aa). The disordered stretch occupies residues 447–489; it reads TPPGSARRLPALSHSEGEEEEDEEEDEGKSWSSEKVKKAKAKS. Phosphoserine is present on residues serine 459 and serine 461. Over residues 463–473 the composition is skewed to acidic residues; that stretch reads GEEEEDEEEDE. The segment at 500 to 819 is interaction with MEAF6 and ING5; the sequence is LAEKRAAAPV…IKKEMTALRR (320 aa). The interval 542-1077 is required for RUNX1 and RUNX2 transcriptional activation; the sequence is YWTLKRQSRN…RGAGWLSEDE (536 aa). Lysine 579 carries the N6-acetyllysine modification. In terms of domain architecture, Bromo spans 627-731; sequence MQLTPFLILL…EQGGAVLRQA (105 aa). Residues 817-1060 form a disordered region; sequence LRRKLAHQRE…VGTGRGVGHS (244 aa). Over residues 823-836 the composition is skewed to basic and acidic residues; that stretch reads HQRETGRDGPERHG. Residue threonine 856 is modified to Phosphothreonine. A compositionally biased stretch (low complexity) spans 856-869; the sequence is TDSAAEESSSQETS. Phosphoserine occurs at positions 858, 915, 920, and 924. Low complexity predominate over residues 993 to 1019; it reads PRSSSDSESSSSSSSSAASDRTSTTPS. A Phosphoserine modification is found at serine 1074. The 84-residue stretch at 1083–1166 folds into the PWWP domain; sequence ALDLVWAKCR…RTKLVPLGVN (84 aa). At serine 1185 the chain carries Phosphoserine.

Component of some HBO1 complex composed of KAT7/HBO1, MEAF6, ING5, and BRPF1. Component of the MOZ/MORF complex composed at least of ING5, KAT6A, KAT6B, MEAF6 and one of BRPF1, BRD1/BRPF2 and BRPF3. Interacts (via PHD-type zinc finger domains) with unmethylated histone H3 at 'Lys-4' (H3K4me0). Interacts with trimethylated 'Lys-36' of histone H3 (H3K36me3). Interacts with ING5; interaction directs BRPF1 to H4K4me3-enriched chromatin at the 5' of active genes. Interacts with KAT7. Post-translationally, acetylated by KAT6A. In terms of tissue distribution, expressed at low level in most tissues, with high expression in the testis and specific regions of the brain.

The protein resides in the nucleus. It localises to the chromosome. The protein localises to the cytoplasm. Functionally, scaffold subunit of various histone acetyltransferase (HAT) complexes, such as the MOZ/MORF and HBO1 complexes, which have a histone H3 acetyltransferase activity. Plays a key role in HBO1 complex by directing KAT7/HBO1 specificity towards histone H3 'Lys-14' acetylation (H3K14ac). Some HAT complexes preferentially mediate histone H3 'Lys-23' (H3K23ac) acetylation. Positively regulates the transcription of RUNX1 and RUNX2. The polypeptide is Peregrin (Mus musculus (Mouse)).